The primary structure comprises 106 residues: Phosphoribosyl-ATP pyrophosphatase (106 aa).

The protein belongs to the PRA-PH family.

The protein localises to the cytoplasm. It carries out the reaction 1-(5-phospho-beta-D-ribosyl)-ATP + H2O = 1-(5-phospho-beta-D-ribosyl)-5'-AMP + diphosphate + H(+). It participates in amino-acid biosynthesis; L-histidine biosynthesis; L-histidine from 5-phospho-alpha-D-ribose 1-diphosphate: step 2/9. The protein is Phosphoribosyl-ATP pyrophosphatase of Lactiplantibacillus plantarum (strain ATCC BAA-793 / NCIMB 8826 / WCFS1) (Lactobacillus plantarum).